The sequence spans 713 residues: Cytosolic endo-beta-N-acetylglucosaminidase (713 aa).

Residues 1 to 36 (MIARKRKSNGSETTSGKIPKDDVSSESCLDQPADES) are disordered. Residues 270–362 (FFDACDGFFT…DFRQNQDKFW (93 aa)) enclose the BRCT domain.

Belongs to the glycosyl hydrolase 85 family.

Its subcellular location is the cytoplasm. The protein localises to the cytosol. It carries out the reaction an N(4)-(oligosaccharide-(1-&gt;3)-[oligosaccharide-(1-&gt;6)]-beta-D-Man-(1-&gt;4)-beta-D-GlcNAc-(1-&gt;4)-alpha-D-GlcNAc)-L-asparaginyl-[protein] + H2O = an oligosaccharide-(1-&gt;3)-[oligosaccharide-(1-&gt;6)]-beta-D-Man-(1-&gt;4)-D-GlcNAc + N(4)-(N-acetyl-beta-D-glucosaminyl)-L-asparaginyl-[protein]. Its function is as follows. Endoglycosidase that releases N-glycans from glycoproteins by cleaving the beta-1,4-glycosidic bond in the N,N'-diacetylchitobiose core. Involved in the processing of free oligosaccharides in the cytosol. The protein is Cytosolic endo-beta-N-acetylglucosaminidase (engase) of Danio rerio (Zebrafish).